The chain runs to 409 residues: Serine/threonine transporter SstT (409 aa).

A run of 9 helical transmembrane segments spans residues 15-35 (LSLV…ALLA), 49-69 (FVSA…MASI), 82-102 (PILV…VIAS), 142-162 (ALMN…GVAI), 193-213 (LGIF…ALLG), 218-238 (LAVL…LIVF), 301-321 (GAAI…GIAV), 331-351 (VVAA…LLLI), and 357-377 (LFGI…IIGV).

It belongs to the dicarboxylate/amino acid:cation symporter (DAACS) (TC 2.A.23) family.

Its subcellular location is the cell inner membrane. The catalysed reaction is L-serine(in) + Na(+)(in) = L-serine(out) + Na(+)(out). It carries out the reaction L-threonine(in) + Na(+)(in) = L-threonine(out) + Na(+)(out). Involved in the import of serine and threonine into the cell, with the concomitant import of sodium (symport system). In Pseudomonas fluorescens (strain ATCC BAA-477 / NRRL B-23932 / Pf-5), this protein is Serine/threonine transporter SstT.